We begin with the raw amino-acid sequence, 348 residues long: Phenylalanine--tRNA ligase alpha subunit (348 aa).

Residue E259 participates in Mg(2+) binding.

The protein belongs to the class-II aminoacyl-tRNA synthetase family. Phe-tRNA synthetase alpha subunit type 1 subfamily. As to quaternary structure, tetramer of two alpha and two beta subunits. It depends on Mg(2+) as a cofactor.

The protein resides in the cytoplasm. The catalysed reaction is tRNA(Phe) + L-phenylalanine + ATP = L-phenylalanyl-tRNA(Phe) + AMP + diphosphate + H(+). The chain is Phenylalanine--tRNA ligase alpha subunit from Lactiplantibacillus plantarum (strain ATCC BAA-793 / NCIMB 8826 / WCFS1) (Lactobacillus plantarum).